A 206-amino-acid chain; its full sequence is Na(+)-translocating NADH-quinone reductase subunit E (206 aa).

6 helical membrane-spanning segments follow: residues 12–32 (AVFV…FLAV), 36–56 (ISSA…TVPV), 85–105 (FLGL…LEMF), 118–138 (GVFL…LFMV), 148–168 (VIYG…LAGI), and 184–204 (LGIT…FSGI).

The protein belongs to the NqrDE/RnfAE family. As to quaternary structure, composed of six subunits; NqrA, NqrB, NqrC, NqrD, NqrE and NqrF.

It localises to the cell inner membrane. The enzyme catalyses a ubiquinone + n Na(+)(in) + NADH + H(+) = a ubiquinol + n Na(+)(out) + NAD(+). In terms of biological role, NQR complex catalyzes the reduction of ubiquinone-1 to ubiquinol by two successive reactions, coupled with the transport of Na(+) ions from the cytoplasm to the periplasm. NqrA to NqrE are probably involved in the second step, the conversion of ubisemiquinone to ubiquinol. In Chromohalobacter salexigens (strain ATCC BAA-138 / DSM 3043 / CIP 106854 / NCIMB 13768 / 1H11), this protein is Na(+)-translocating NADH-quinone reductase subunit E.